A 732-amino-acid chain; its full sequence is Iron-sulfur clusters transporter ATM1, mitochondrial (732 aa).

The transit peptide at 1 to 55 (MGFGSCSRHALFTPAAFSGSFTTMTTSCFKRVYTAQIHGGDALGKRLPSVSSFSG) directs the protein to the mitochondrion. The Mitochondrial matrix segment spans residues 56-143 (QLPRHGLHRQ…KNNPNVKFRV (88 aa)). Residues 71–114 (STSHRRQTSPPPSPRTTSQSPTVPSKASTTPPTSLNTSKPIATE) form a disordered region. Positions 85–95 (RTTSQSPTVPS) are enriched in low complexity. A compositionally biased stretch (polar residues) spans 96 to 114 (KASTTPPTSLNTSKPIATE). Residues 144-164 (IGALTLLVAGKVLNVQVPFFF) form a helical membrane-spanning segment. The region spanning 144–432 (IGALTLLVAG…LGTVYRELRQ (289 aa)) is the ABC transmembrane type-1 domain. The Mitochondrial intermembrane segment spans residues 165-181 (KTIVDSLNVPITESTTV). The helical transmembrane segment at 182–202 (WVLAGASIAGYGAARILTTLF) threads the bilayer. Residues 203–262 (GELRNAVFASVAQNAIRKVARETFEHLLNMDMKFHLERQTGGLTRAIDRGTKGISFILSS) lie on the Mitochondrial matrix side of the membrane. Residues 263–283 (IVFHVIPTALEISMVCGILSW) form a helical membrane-spanning segment. A topological domain (mitochondrial intermembrane) is located at residue K284. Residues 285–305 (FGWDFAAVTAITMLLYTWFTI) form a helical membrane-spanning segment. Topologically, residues 306–378 (KTTAWRTTFR…SLAALNSGQN (73 aa)) are mitochondrial matrix. Residues 311–315 (RTTFR) and 374–377 (NSGQ) each bind glutathione. The helical transmembrane segment at 379 to 399 (FIFSSALTMMMLLGAQGIVKG) threads the bilayer. Residues 400-405 (TMTVGD) are Mitochondrial intermembrane-facing. The chain crosses the membrane as a helical span at residues 406-426 (LVLVNQLVFQLSLPLNFLGTV). G424 contributes to the glutathione binding site. Topologically, residues 427–732 (YRELRQSLID…LEVVDEKKKQ (306 aa)) are mitochondrial matrix. The region spanning 466-702 (IEFRNVAFAY…PGGVYHRLWQ (237 aa)) is the ABC transporter domain. Residues Y475 and 499-506 (GPSGCGKS) contribute to the ATP site. The segment at 708 to 732 (STQPTDEEIERQREELEVVDEKKKQ) is disordered. Residues 717–732 (ERQREELEVVDEKKKQ) show a composition bias toward basic and acidic residues.

Belongs to the ABC transporter superfamily. ABCB family. Heavy Metal importer (TC 3.A.1.210) subfamily. Homodimer.

It localises to the mitochondrion inner membrane. Functionally, performs an essential function in the generation of cytoplasmic iron-sulfur proteins by mediating the ATP-dependent export of mitochondrial Fe/S cluster precursors synthesized by NFS1 and other mitochondrial proteins. Hydrolyzes ATP. Binds glutathione and may function by transporting a glutathione-conjugated iron-sulfur compound. Plays a role during copper stress, in a manner dependent on the copper metalloregulatory transcription factor CUF1. The sequence is that of Iron-sulfur clusters transporter ATM1, mitochondrial from Cryptococcus neoformans var. grubii serotype A (strain H99 / ATCC 208821 / CBS 10515 / FGSC 9487) (Filobasidiella neoformans var. grubii).